We begin with the raw amino-acid sequence, 396 residues long: Putative nickel insertion protein (396 aa).

The protein belongs to the LarC family.

The polypeptide is Putative nickel insertion protein (Methanosarcina barkeri (strain Fusaro / DSM 804)).